The chain runs to 164 residues: Ferredoxin-type protein NapF (164 aa).

4Fe-4S ferredoxin-type domains are found at residues 28–57, 58–89, and 132–161; these read GDES…RGAG, GYPS…PRHT, and YQPQ…AEYL. Positions 37, 40, 43, 47, 69, 72, 75, 79, 141, 144, 147, and 151 each coordinate [4Fe-4S] cluster.

It belongs to the NapF family. Interacts with the cytoplasmic NapA precursor. [4Fe-4S] cluster is required as a cofactor.

It localises to the cytoplasm. In terms of biological role, could be involved in the maturation of NapA, the catalytic subunit of the periplasmic nitrate reductase, before its export into the periplasm. The polypeptide is Ferredoxin-type protein NapF (Escherichia coli O157:H7).